The following is a 132-amino-acid chain: Prefoldin subunit alpha (132 aa).

The protein belongs to the prefoldin subunit alpha family. As to quaternary structure, heterohexamer of two alpha and four beta subunits.

The protein resides in the cytoplasm. Functionally, molecular chaperone capable of stabilizing a range of proteins. Seems to fulfill an ATP-independent, HSP70-like function in archaeal de novo protein folding. The sequence is that of Prefoldin subunit alpha (pfdA) from Pyrobaculum aerophilum (strain ATCC 51768 / DSM 7523 / JCM 9630 / CIP 104966 / NBRC 100827 / IM2).